The chain runs to 183 residues: Ras-like protein (183 aa).

10 to 17 is a binding site for GTP; the sequence is GAGGVGKS. The Effector region motif lies at 32 to 40; it reads YDPTIEDSY. GTP-binding positions include 57–61 and 116–119; these read DTAGQ and NKCD.

This sequence belongs to the small GTPase superfamily. Ras family.

It localises to the cell membrane. The catalysed reaction is GTP + H2O = GDP + phosphate + H(+). Its activity is regulated as follows. Alternates between an inactive form bound to GDP and an active form bound to GTP. Activated by a guanine nucleotide-exchange factor (GEF) and inactivated by a GTPase-activating protein (GAP). Functionally, ras proteins bind GDP/GTP and possess intrinsic GTPase activity. The sequence is that of Ras-like protein from Carassius auratus (Goldfish).